The following is a 308-amino-acid chain: Ribosomal RNA small subunit methyltransferase H (308 aa).

S-adenosyl-L-methionine-binding positions include 35-37 (GGH), aspartate 54, phenylalanine 80, aspartate 101, and glutamine 108.

This sequence belongs to the methyltransferase superfamily. RsmH family.

It localises to the cytoplasm. The enzyme catalyses cytidine(1402) in 16S rRNA + S-adenosyl-L-methionine = N(4)-methylcytidine(1402) in 16S rRNA + S-adenosyl-L-homocysteine + H(+). Functionally, specifically methylates the N4 position of cytidine in position 1402 (C1402) of 16S rRNA. This chain is Ribosomal RNA small subunit methyltransferase H, found in Mycoplasma pneumoniae (strain ATCC 29342 / M129 / Subtype 1) (Mycoplasmoides pneumoniae).